Reading from the N-terminus, the 518-residue chain is Mitochondrial distribution and morphology protein 34 (518 aa).

The SMP-LTD domain occupies 1–198; it reads MSFKVNWNTL…LPTLIHRLSL (198 aa). 2 disordered regions span residues 335–369 and 491–518; these read SRPK…SEMS and IPDV…PYQV. Residues 336-350 are compositionally biased toward basic residues; sequence RPKRRVIKLGSKKSS. A compositionally biased stretch (basic and acidic residues) spans 492-506; that stretch reads PDVKSHPGTGRKLDT.

This sequence belongs to the MDM34 family. In terms of assembly, component of the ER-mitochondria encounter structure (ERMES) or MDM complex, composed of MMM1, MDM10, MDM12 and MDM34.

It localises to the mitochondrion outer membrane. Its function is as follows. Component of the ERMES/MDM complex, which serves as a molecular tether to connect the endoplasmic reticulum (ER) and mitochondria. Components of this complex are involved in the control of mitochondrial shape and protein biogenesis, and function in nonvesicular lipid trafficking between the ER and mitochondria. MDM34 is required for the interaction of the ER-resident membrane protein MMM1 and the outer mitochondrial membrane-resident beta-barrel protein MDM10. This is Mitochondrial distribution and morphology protein 34 from Meyerozyma guilliermondii (strain ATCC 6260 / CBS 566 / DSM 6381 / JCM 1539 / NBRC 10279 / NRRL Y-324) (Yeast).